Reading from the N-terminus, the 349-residue chain is Ribonucleoside-diphosphate reductase small chain (349 aa).

3 residues coordinate Fe cation: Asp99, Glu130, and His133. Tyr137 is an active-site residue. Fe cation contacts are provided by Glu192, Glu226, and His229.

The protein belongs to the ribonucleoside diphosphate reductase small chain family. In terms of assembly, heterodimer of a large and a small subunit. It depends on Fe cation as a cofactor.

It catalyses the reaction a 2'-deoxyribonucleoside 5'-diphosphate + [thioredoxin]-disulfide + H2O = a ribonucleoside 5'-diphosphate + [thioredoxin]-dithiol. Its function is as follows. Provides the precursors necessary for DNA synthesis. Catalyzes the biosynthesis of deoxyribonucleotides from the corresponding ribonucleotides. In Plasmodium falciparum (isolate Dd2), this protein is Ribonucleoside-diphosphate reductase small chain (RNR2).